The primary structure comprises 241 residues: Chlorophyll a-b binding protein 6, chloroplastic (241 aa).

A chloroplast-targeting transit peptide spans 1–35; it reads MASNSLMSCGIAAVYPSLLSSSKSKFVSAGVPLPN. W48 serves as a coordination point for chlorophyll b. Residues F68, E87, and H90 each contribute to the chlorophyll a site. Chlorophyll b is bound at residue R92. The chain crosses the membrane as a helical span at residues 93 to 113; the sequence is WAMLAVPGILVPEALGYGNWV. A chlorophyll a-binding site is contributed by L129. The helical transmembrane segment at 132 to 152 threads the bilayer; it reads PVPWGTLPTILAIEFLAIAFV. V133, E153, and R156 together coordinate chlorophyll b. Chlorophyll a contacts are provided by K190, E191, N194, R196, Q208, and H224. Residues 197–217 traverse the membrane as a helical segment; that stretch reads LALLAFVGFCVQQSAYPGTGP.

This sequence belongs to the light-harvesting chlorophyll a/b-binding (LHC) protein family. The LHC complex consists of chlorophyll a-b binding proteins. Red-emitting heterodimer with LHCA4. Interacts with LHCA5. Requires Binds at least 14 chlorophylls (8 Chl-a and 6 Chl-b) and carotenoids such as lutein and neoxanthin. as cofactor. Photoregulated by reversible phosphorylation of its threonine residues.

The protein localises to the plastid. Its subcellular location is the chloroplast thylakoid membrane. The light-harvesting complex (LHC) functions as a light receptor, it captures and delivers excitation energy to photosystems with which it is closely associated. In Arabidopsis thaliana (Mouse-ear cress), this protein is Chlorophyll a-b binding protein 6, chloroplastic.